Consider the following 428-residue polypeptide: Enolase (428 aa).

Q163 lines the (2R)-2-phosphoglycerate pocket. E205 serves as the catalytic Proton donor. Mg(2+) contacts are provided by D242, E286, and D313. The (2R)-2-phosphoglycerate site is built by K338, R367, S368, and K389. K338 functions as the Proton acceptor in the catalytic mechanism.

It belongs to the enolase family. It depends on Mg(2+) as a cofactor.

It is found in the cytoplasm. The protein resides in the secreted. Its subcellular location is the cell surface. It catalyses the reaction (2R)-2-phosphoglycerate = phosphoenolpyruvate + H2O. Its pathway is carbohydrate degradation; glycolysis; pyruvate from D-glyceraldehyde 3-phosphate: step 4/5. Its function is as follows. Catalyzes the reversible conversion of 2-phosphoglycerate (2-PG) into phosphoenolpyruvate (PEP). It is essential for the degradation of carbohydrates via glycolysis. This is Enolase from Lactobacillus helveticus (strain DPC 4571).